The primary structure comprises 319 residues: Protein MGF 360-8L (319 aa).

It belongs to the asfivirus MGF 360 family.

In terms of biological role, plays a role in virus cell tropism, and may be required for efficient virus replication in macrophages. The sequence is that of Protein MGF 360-8L from Ornithodoros (relapsing fever ticks).